The sequence spans 600 residues: Translation initiation factor IF-2 (600 aa).

Residues 112–279 form the tr-type G domain; it reads ERAPIITVMG…AINLQAEILE (168 aa). The tract at residues 121-128 is G1; that stretch reads GHVDHGKT. Residue 121–128 coordinates GTP; it reads GHVDHGKT. The segment at 146–150 is G2; that stretch reads GITQH. Residues 167–170 are G3; the sequence is DTPG. GTP contacts are provided by residues 167 to 171 and 221 to 224; these read DTPGH and NKMD. Positions 221–224 are G4; the sequence is NKMD. Residues 257-259 are G5; that stretch reads SAL.

Belongs to the TRAFAC class translation factor GTPase superfamily. Classic translation factor GTPase family. IF-2 subfamily.

It is found in the cytoplasm. One of the essential components for the initiation of protein synthesis. Protects formylmethionyl-tRNA from spontaneous hydrolysis and promotes its binding to the 30S ribosomal subunits. Also involved in the hydrolysis of GTP during the formation of the 70S ribosomal complex. In Mycoplasma mobile (strain ATCC 43663 / 163K / NCTC 11711) (Mesomycoplasma mobile), this protein is Translation initiation factor IF-2.